We begin with the raw amino-acid sequence, 214 residues long: UPF0758 protein (214 aa).

Residues 92–214 (VLSSWQALLD…ELSFRAEGLL (123 aa)) enclose the MPN domain. Zn(2+)-binding residues include His163, His165, and Asp176. The JAMM motif signature appears at 163-176 (HNHPSGDPTPSQAD).

This sequence belongs to the UPF0758 family.

In Rhodobacter capsulatus (Rhodopseudomonas capsulata), this protein is UPF0758 protein.